Here is a 170-residue protein sequence, read N- to C-terminus: Ribosome maturation factor RimP (170 aa).

Belongs to the RimP family.

The protein resides in the cytoplasm. In terms of biological role, required for maturation of 30S ribosomal subunits. The sequence is that of Ribosome maturation factor RimP from Acidothermus cellulolyticus (strain ATCC 43068 / DSM 8971 / 11B).